We begin with the raw amino-acid sequence, 51 residues long: Lantibiotic streptococcin A-M49 (51 aa).

Positions M1 to A25 are excised as a propeptide. Cross-links (beta-methyllanthionine (Thr-Cys)) lie at residues T33–C38 and T42–C50. The lanthionine (Ser-Cys) cross-link spans S35 to C49. At T48 the chain carries 2,3-didehydrobutyrine.

Belongs to the type A lantibiotic family. Post-translationally, maturation of lantibiotics involves the enzymatic conversion of Thr, and Ser into dehydrated AA and the formation of thioether bonds with cysteine. This is followed by membrane translocation and cleavage of the modified precursor.

The protein localises to the secreted. The protein resides in the cell surface. Functionally, lanthionine-containing peptide antibiotic (lantibiotic) active on certain Gram-positive bacteria. The bactericidal activity of lantibiotics is based on depolarization of energized bacterial cytoplasmic membranes, initiated by the formation of aqueous transmembrane pores. This Streptococcus pyogenes serotype M49 protein is Lantibiotic streptococcin A-M49 (scnA').